A 160-amino-acid chain; its full sequence is MSVTKKPDLSDPVLKAKLAKGMGHNTYGEPAWPNDLLYMFPVVILGTFACVIGLSVLDPAAMGEPANPFATPLEILPEWYFYPVFQILRVVPNKLLGVLLMAAVPAGLITVPFIESINKFQNPYRRPIATILFLLGTLVAVWLGIGSTFPIDISLTLGLF.

3 consecutive transmembrane segments (helical) span residues 36–56 (LLYM…GLSV), 95–115 (LLGV…PFIE), and 131–151 (ILFL…TFPI).

This sequence belongs to the cytochrome b family. PetD subfamily. The 4 large subunits of the cytochrome b6-f complex are cytochrome b6, subunit IV (17 kDa polypeptide, petD), cytochrome f and the Rieske protein, while the 4 small subunits are petG, petL, petM and petN. The complex functions as a dimer. The N-terminus is blocked.

It is found in the plastid. The protein resides in the chloroplast thylakoid membrane. Component of the cytochrome b6-f complex, which mediates electron transfer between photosystem II (PSII) and photosystem I (PSI), cyclic electron flow around PSI, and state transitions. This chain is Cytochrome b6-f complex subunit 4, found in Chlamydomonas reinhardtii (Chlamydomonas smithii).